Here is a 403-residue protein sequence, read N- to C-terminus: Dual-specificity RNA methyltransferase RlmN (403 aa).

Glutamate 121 (proton acceptor) is an active-site residue. The 249-residue stretch at 127-375 (ETDRGTLCVS…VRTPRGRDIL (249 aa)) folds into the Radical SAM core domain. Cysteine 134 and cysteine 378 are oxidised to a cystine. [4Fe-4S] cluster contacts are provided by cysteine 141, cysteine 145, and cysteine 148. Residues 204-205 (GE), serine 236, 258-260 (SLH), and asparagine 335 contribute to the S-adenosyl-L-methionine site. Catalysis depends on cysteine 378, which acts as the S-methylcysteine intermediate.

The protein belongs to the radical SAM superfamily. RlmN family. The cofactor is [4Fe-4S] cluster.

The protein resides in the cytoplasm. The catalysed reaction is adenosine(2503) in 23S rRNA + 2 reduced [2Fe-2S]-[ferredoxin] + 2 S-adenosyl-L-methionine = 2-methyladenosine(2503) in 23S rRNA + 5'-deoxyadenosine + L-methionine + 2 oxidized [2Fe-2S]-[ferredoxin] + S-adenosyl-L-homocysteine. It carries out the reaction adenosine(37) in tRNA + 2 reduced [2Fe-2S]-[ferredoxin] + 2 S-adenosyl-L-methionine = 2-methyladenosine(37) in tRNA + 5'-deoxyadenosine + L-methionine + 2 oxidized [2Fe-2S]-[ferredoxin] + S-adenosyl-L-homocysteine. Specifically methylates position 2 of adenine 2503 in 23S rRNA and position 2 of adenine 37 in tRNAs. m2A2503 modification seems to play a crucial role in the proofreading step occurring at the peptidyl transferase center and thus would serve to optimize ribosomal fidelity. The chain is Dual-specificity RNA methyltransferase RlmN from Rhodopseudomonas palustris (strain BisA53).